The sequence spans 260 residues: MLAIISPAKTLDFETPAPNFPFANSQPKLTAYSQQLIDICKQFSPAELGSLMSISDKLASLNVARFAEWQLEHNEQNSKAALFAFKGDVYTGLDAETLTQAQVEYVQVHLRMLSGLYGLLKPLDLMQPYRLEMGTKLVNPKGKDLYAFWGDIITQHLQTAMDEQGDNILVNLASDEYYGAVKPQKLQATIIKPVFLDEKNGKFKQISFYAKKARGMMVRFILETQPTSVEQLKAFNYGSYWFDEDASGATELVFKREEQA.

The protein belongs to the UPF0246 family.

The chain is UPF0246 protein APP7_0648 from Actinobacillus pleuropneumoniae serotype 7 (strain AP76).